Reading from the N-terminus, the 4351-residue chain is Protocadherin Fat 2 (4351 aa).

The first 18 residues, 1–18, serve as a signal peptide directing secretion; sequence MTLVLLGLAILLLHRAAC. Residues 19-4050 are Extracellular-facing; it reads EKSLEETIPP…IKRGDWGQQE (4032 aa). 2 Cadherin domains span residues 34–148 and 149–256; these read THSL…KPLF and SPPS…PPAI. Residues Asn39, Asn210, Asn280, and Asn330 are each glycosylated (N-linked (GlcNAc...) asparagine). Cadherin domains lie at 363 to 458, 459 to 564, 565 to 669, 716 to 820, 821 to 925, 926 to 1032, 1033 to 1142, 1138 to 1242, 1243 to 1346, 1350 to 1448, 1449 to 1555, 1556 to 1660, 1661 to 1758, 1759 to 1872, 1873 to 1968, 1969 to 2070, 2071 to 2171, 2172 to 2272, 2273 to 2379, 2380 to 2481, 2482 to 2585, 2586 to 2692, 2693 to 2799, 2800 to 2908, 2909 to 3013, 3014 to 3115, 3116 to 3220, 3221 to 3323, 3324 to 3428, 3429 to 3533, and 3534 to 3631; these read EKAV…APVF, NRSS…QPMF, EEVN…VPVQ, DHFP…PPRF, PPGG…PPQC, ITEH…SPHF, SSFV…RPVF, SRPV…PPMF, SHKL…SSIP, DESY…RPQF, LQDH…SPHF, TQLR…APVF, SKDE…PPAF, GKPT…PPRF, SEQI…SLQF, DQDV…IPEF, QHLP…NPLF, QSPY…PPTF, SQLV…PPKF, REPQ…SPEF, QQNV…APQF, KASG…LPKF, SEPL…RPVF, EADP…PPRF, ASED…SPQC, SQLL…APRF, FPSH…LPIF, LNAE…HPRF, THDL…PPRF, FQLN…PPST, and LPLE…VPQQ. Residues Asn459, Asn568, Asn627, and Asn789 are each glycosylated (N-linked (GlcNAc...) asparagine). Asn996 carries N-linked (GlcNAc...) asparagine glycosylation. N-linked (GlcNAc...) asparagine glycosylation is found at Asn1175, Asn1276, and Asn1417. 13 N-linked (GlcNAc...) asparagine glycosylation sites follow: Asn1899, Asn1998, Asn2007, Asn2102, Asn2165, Asn2183, Asn2325, Asn2368, Asn2387, Asn2430, Asn2470, Asn2547, and Asn2597. Asn3127, Asn3278, and Asn3312 each carry an N-linked (GlcNAc...) asparagine glycan. Asn3432, Asn3603, Asn3770, Asn3774, Asn3815, Asn3842, Asn3875, and Asn3906 each carry an N-linked (GlcNAc...) asparagine glycan. The 172-residue stretch at 3775 to 3946 folds into the Laminin G-like domain; sequence GTTLRFSGQS…RLETWALSQC (172 aa). Disulfide bonds link Cys3914/Cys3946, Cys3953/Cys3964, Cys3958/Cys3974, and Cys3976/Cys3985. EGF-like domains lie at 3949 to 3986 and 3988 to 4024; these read PGTA…RNCE and GREN…DRCE. Asn3991 is a glycosylation site (N-linked (GlcNAc...) asparagine). 3 cysteine pairs are disulfide-bonded: Cys3992-Cys4003, Cys3997-Cys4012, and Cys4014-Cys4023. Residues 4051-4071 traverse the membrane as a helical segment; the sequence is FLVITVALPLVIIATVGLLLY. Residues 4072-4351 are Cytoplasmic-facing; that stretch reads CRRRKSHKPV…DYGSCEEVMF (280 aa). Residues 4316 to 4340 are disordered; the sequence is VNGGPATGRSQPRAPPNYEGSDMVE.

As to quaternary structure, homodimer. In terms of tissue distribution, cerebellum-specific expression. Expressed in thin parallel fibers of cerebellar granule cells.

Its subcellular location is the cell membrane. The protein localises to the cell junction. The protein resides in the golgi apparatus. It localises to the trans-Golgi network. Its function is as follows. Involved in the regulation of cell migration. May be involved in mediating the organization of the parallel fibers of granule cells during cerebellar development. This is Protocadherin Fat 2 (Fat2) from Rattus norvegicus (Rat).